The primary structure comprises 280 residues: Bifunctional protein FolD (280 aa).

Residues 159 to 161 (GRS), Ser184, and Ile225 each bind NADP(+).

It belongs to the tetrahydrofolate dehydrogenase/cyclohydrolase family. Homodimer.

The enzyme catalyses (6R)-5,10-methylene-5,6,7,8-tetrahydrofolate + NADP(+) = (6R)-5,10-methenyltetrahydrofolate + NADPH. It catalyses the reaction (6R)-5,10-methenyltetrahydrofolate + H2O = (6R)-10-formyltetrahydrofolate + H(+). The protein operates within one-carbon metabolism; tetrahydrofolate interconversion. Its function is as follows. Catalyzes the oxidation of 5,10-methylenetetrahydrofolate to 5,10-methenyltetrahydrofolate and then the hydrolysis of 5,10-methenyltetrahydrofolate to 10-formyltetrahydrofolate. The protein is Bifunctional protein FolD of Methanosphaerula palustris (strain ATCC BAA-1556 / DSM 19958 / E1-9c).